The primary structure comprises 275 residues: Erythroagglutinating phytohemagglutinin (275 aa).

Positions 1-21 (MASSNLLSLALFLVLLTHANS) are cleaved as a signal peptide. Asn-33 is a glycosylation site (N-linked (GlcNAc...) (high mannose) asparagine). Residues Asn-81 and Asn-101 are each glycosylated (N-linked (GlcNAc...) asparagine).

This sequence belongs to the leguminous lectin family.

In terms of biological role, this insecticidal carbohydrate-binding lectin is toxic for the cowpea weevil. The sequence is that of Erythroagglutinating phytohemagglutinin (DLEC1) from Phaseolus vulgaris (Kidney bean).